Reading from the N-terminus, the 465-residue chain is Antithrombin-III (465 aa).

Residues 1–32 form the signal peptide; it reads MISNGIGTVTAGKRSICLLPLLLIGLWGCVTC. Intrachain disulfides connect Cys41–Cys161 and Cys54–Cys128. Residue Thr64 is modified to Phosphothreonine. Ser69 is modified (phosphoserine). Trp82 provides a ligand contact to heparin. The N-linked (GlcNAc...) asparagine glycan is linked to Asn129. Position 162 (Arg162) interacts with heparin. Asn168 carries N-linked (GlcNAc...) asparagine glycosylation. Residue Arg178 participates in heparin binding. Asn188 and Asn225 each carry an N-linked (GlcNAc...) asparagine glycan. Residues Cys280 and Cys463 are joined by a disulfide bond.

The protein belongs to the serpin family. As to quaternary structure, forms protease inhibiting heterodimer with TMPRSS7. Phosphorylated by FAM20C in the extracellular medium. In terms of tissue distribution, plasma.

It localises to the secreted. It is found in the extracellular space. Most important serine protease inhibitor in plasma that regulates the blood coagulation cascade. AT-III inhibits thrombin, matriptase-3/TMPRSS7, as well as factors IXa, Xa and XIa. Its inhibitory activity is greatly enhanced in the presence of heparin. The sequence is that of Antithrombin-III (SERPINC1) from Bos taurus (Bovine).